The sequence spans 611 residues: UvrABC system protein C (611 aa).

A GIY-YIG domain is found at 14–91 (TSPGCYIHKD…IKENKPKYNI (78 aa)). The region spanning 196 to 231 (DQIIEDLRGKMAGAAQTMEFEKAAEYRDLIQSIGTL) is the UVR domain.

Belongs to the UvrC family. As to quaternary structure, interacts with UvrB in an incision complex.

It is found in the cytoplasm. In terms of biological role, the UvrABC repair system catalyzes the recognition and processing of DNA lesions. UvrC both incises the 5' and 3' sides of the lesion. The N-terminal half is responsible for the 3' incision and the C-terminal half is responsible for the 5' incision. This is UvrABC system protein C from Streptococcus gordonii (strain Challis / ATCC 35105 / BCRC 15272 / CH1 / DL1 / V288).